Here is a 578-residue protein sequence, read N- to C-terminus: A-type ATP synthase subunit A (578 aa).

An ATP-binding site is contributed by 228-235; the sequence is GPFGSGKT.

It belongs to the ATPase alpha/beta chains family. As to quaternary structure, has multiple subunits with at least A(3), B(3), C, D, E, F, G, I and proteolipid K(x).

It localises to the cell membrane. The catalysed reaction is ATP + H2O + 4 H(+)(in) = ADP + phosphate + 5 H(+)(out). Its activity is regulated as follows. ATP hydrolysis stimulated by sulfite, ethanol, glycerol, magnesium and zinc ions, inhibited by diethylstilbestrol (DES) and less well by N,N-dicyclohexylcarbodiimide (DCCD). Functionally, component of the A-type ATP synthase that produces ATP from ADP in the presence of a proton gradient across the membrane. The A chain is the catalytic subunit. The polypeptide is A-type ATP synthase subunit A (Methanosarcina mazei (strain ATCC BAA-159 / DSM 3647 / Goe1 / Go1 / JCM 11833 / OCM 88) (Methanosarcina frisia)).